The sequence spans 629 residues: tRNA uridine 5-carboxymethylaminomethyl modification enzyme MnmG (629 aa).

FAD is bound by residues 13-18, valine 125, and serine 180; that span reads GGGHAG. 273–287 lines the NAD(+) pocket; sequence GPRYCPSIEDKVMRF. Glutamine 370 serves as a coordination point for FAD.

Belongs to the MnmG family. In terms of assembly, homodimer. Heterotetramer of two MnmE and two MnmG subunits. The cofactor is FAD.

It localises to the cytoplasm. In terms of biological role, NAD-binding protein involved in the addition of a carboxymethylaminomethyl (cmnm) group at the wobble position (U34) of certain tRNAs, forming tRNA-cmnm(5)s(2)U34. This chain is tRNA uridine 5-carboxymethylaminomethyl modification enzyme MnmG, found in Salmonella arizonae (strain ATCC BAA-731 / CDC346-86 / RSK2980).